The chain runs to 747 residues: Superkiller protein 7 (747 aa).

The interval 14–51 (KSKGLLSADQSHSTSKSASLLERLHKNRETKDNNAETK) is disordered. Residues 21–31 (ADQSHSTSKSA) are compositionally biased toward polar residues. A compositionally biased stretch (basic and acidic residues) spans 35 to 51 (ERLHKNRETKDNNAETK). 2 positions are modified to phosphoserine: serine 88 and serine 90. Residues 89 to 117 (NSDLEKQGKSVTLDSKENELPTKRKSPDD) are disordered. The 239-residue stretch at 265–503 (PLNLTCLFLG…YVPEWYEGPT (239 aa)) folds into the tr-type G domain. The interval 274 to 281 (GDTNAGKS) is G1. 274–281 (GDTNAGKS) is a GTP binding site. Residues 331–335 (GFSMF) form a G2 region. The segment at 356-359 (DTPG) is G3. Residues 356–360 (DTPGS) and 427–430 (NKAD) contribute to the GTP site. Residues 427–430 (NKAD) are G4. A G5 region spans residues 467 to 469 (SGL).

It belongs to the TRAFAC class translation factor GTPase superfamily. Classic translation factor GTPase family. In terms of assembly, interacts with the exosome and with the SKI complex composed of at least SKI2, SKI3 and SKI8. Interacts directly with SKI3 and SKI8.

The protein localises to the cytoplasm. Its function is as follows. Represses the expression of non-poly(A) mRNAs like L-A or M viruses and is therefore involved in antiviral system. Mediates interactions via its N-terminus between the exosome and the SKI complex which operate in the 3'-to-5' mRNA-decay pathway. By interacting with NAM7, is also required for nonsense-mediated 3'-to-5' mRNA-decay (NMD). May recognize a stalled 80S ribosome at the 3'-end of a nonstop mRNA which leads to the recruitment of the exosome and SKI complexes to the mRNAs to be degraded. This chain is Superkiller protein 7 (SKI7), found in Saccharomyces cerevisiae (strain ATCC 204508 / S288c) (Baker's yeast).